Reading from the N-terminus, the 603-residue chain is Linalool synthase Tps-5031L19, chloroplastic (603 aa).

Residues 1 to 36 (MSSMRTYVAIMKKPSVEHVDNVDKKASKPSWRVSLS) constitute a chloroplast transit peptide. (2E)-geranyl diphosphate is bound by residues Arg322, Asp359, Asp363, Arg500, and Asp503. Residues Asp359 and Asp363 each coordinate Mg(2+). A DDXXD motif motif is present at residues 359–363 (DDVYD). Residues Asp503, Thr507, and Glu511 each coordinate Mg(2+).

It belongs to the terpene synthase family. Tpsb subfamily. Monomer. Mg(2+) is required as a cofactor. Requires Mn(2+) as cofactor.

It localises to the plastid. The protein localises to the chloroplast. It carries out the reaction (2E)-geranyl diphosphate + H2O = linalool + diphosphate. The protein operates within secondary metabolite biosynthesis; terpenoid biosynthesis. In terms of biological role, monoterpene synthase (mono-TPS) involved in the biosynthesis of monoterpenes natural products. Catalyzes the conversion of (2E)-geranyl diphosphate (GPP) into linalool. This chain is Linalool synthase Tps-5031L19, chloroplastic, found in Perilla frutescens var. hirtella (Perilla citriodora).